Consider the following 222-residue polypeptide: ER membrane protein complex subunit 7 homolog (222 aa).

Residues 1–16 form the signal peptide; sequence MKSILLLFSLIVLGSA. At 17-145 the chain is on the extracellular side; the sequence is TEEVSRTEQT…RKREEWRITD (129 aa). Residues 146-166 form a helical membrane-spanning segment; sequence MLFSPMVLMLVVPLVVMLILP. The Cytoplasmic segment spans residues 167–222; sequence KMTANDPELKKEMENMQMPKVDMPDVGEMMANFFGGSAPAKKKAVTGGSGSGQRRK.

The protein belongs to the EMC7 family.

The protein resides in the membrane. The sequence is that of ER membrane protein complex subunit 7 homolog from Caenorhabditis elegans.